A 659-amino-acid chain; its full sequence is uncharacterized protein (659 aa).

16 helical membrane-spanning segments follow: residues 24–44 (TTLM…YGLF), 71–91 (FGAS…VMMV), 115–135 (IGWL…DSGV), 157–177 (RAWI…RVII), 183–203 (FVLL…GNAG), 214–234 (AVIV…TAAL), 242–262 (AVLI…AELV), 279–299 (LGLV…WALV), 311–331 (LTAL…VQTA), 365–385 (FDSL…AGFV), 393–413 (TWPV…VFTS), 433–453 (MTLN…TLAL), 490–510 (FILF…DTLV), 517–537 (EFMA…IIGI), 550–570 (IGLL…LMTM), and 596–616 (IGGA…IVAL).

This sequence to M.tuberculosis Rv0102.

It localises to the cell membrane. This is an uncharacterized protein from Mycobacterium leprae (strain TN).